The sequence spans 76 residues: Small ribosomal subunit protein bS18 (76 aa).

The protein belongs to the bacterial ribosomal protein bS18 family. Part of the 30S ribosomal subunit. Forms a tight heterodimer with protein bS6.

In terms of biological role, binds as a heterodimer with protein bS6 to the central domain of the 16S rRNA, where it helps stabilize the platform of the 30S subunit. This Marinobacter nauticus (strain ATCC 700491 / DSM 11845 / VT8) (Marinobacter aquaeolei) protein is Small ribosomal subunit protein bS18.